A 980-amino-acid chain; its full sequence is SLIT and NTRK-like protein 3 (980 aa).

Positions 1-27 (MMKPSIAEMLHRGRMLWIILLSTIALG) are cleaved as a signal peptide. Residues 30–655 (TPIPLIEDSE…SPPGGPVPLS (626 aa)) lie on the Extracellular side of the membrane. An N-linked (GlcNAc...) asparagine glycan is attached at asparagine 69. LRR repeat units follow at residues 79–100 (RPFK…SFLH), 103–124 (NAVS…AFNG), 127–148 (ILKR…TFLG), 151–172 (SLEY…AFRN), 175–196 (KLRV…LFKA), and 198–219 (SLTH…GMLD). Positions 233–284 (NPWNCTCEIVQLKSWLERIPYTALVGDITCETPFHFHGKDLREIKKTELCPL) constitute an LRRCT 1 domain. Positions 326–361 (EYKSSNKQPKPTKQPRTPRPPSTSQALYPGPNQPPI) are disordered. One can recognise an LRRNT domain in the interval 365–407 (QTRPPIPIICPTGCTCNLHINDLGLTVNCKERGFNNISELLPR). LRR repeat units lie at residues 410 to 431 (NAKK…DFWN), 434 to 455 (SLDL…AFIN), 458 to 479 (NLKS…MFRG), 482 to 503 (SLHY…AFSL), 506 to 527 (NLKL…AFAG), and 529 to 550 (SLAR…GVLE). Residues 563 to 614 (NPWDCTCDLVPFKQWIETISSVSVVGDVLCRTPENLTHRDVRTIELEVLCPE) form the LRRCT 2 domain. Residue asparagine 597 is glycosylated (N-linked (GlcNAc...) asparagine). Positions 622–644 (GPSPPQPGDYHPNGGPTSASPYE) are disordered. Residues 656 to 676 (VLILSLLVLFFSAVFVAAGLF) traverse the membrane as a helical segment. The Cytoplasmic portion of the chain corresponds to 677–980 (AYVLRRRRKK…EVLEKTAYRF (304 aa)). 2 disordered regions span residues 709–735 (LFED…EKAP) and 762–785 (EEEV…GTQP). The span at 715–725 (GNSGGSGGGGR) shows a compositional bias: gly residues.

This sequence belongs to the SLITRK family. In terms of tissue distribution, broadly expressed in embryonic brain with highest expression in cortical plate, pyramidal cell layer of the hippocampus, thalamus and hypothalamus.

The protein resides in the membrane. Suppresses neurite outgrowth. In Mus musculus (Mouse), this protein is SLIT and NTRK-like protein 3 (Slitrk3).